Here is a 519-residue protein sequence, read N- to C-terminus: Pleckstrin homology domain-containing family A member 8 (519 aa).

The region spanning 1–93 is the PH domain; the sequence is MEGVLYKWTN…WLVALGSAKA (93 aa). Thr139 bears the Phosphothreonine mark. The residue at position 145 (Ser145) is a Phosphoserine. Phosphothreonine is present on Thr153. A disordered region spans residues 274–302; that stretch reads GEDNLGNHDSSLAQPASDSSSSPPESHWE. Residues 282–298 show a composition bias toward low complexity; sequence DSSLAQPASDSSSSPPE. Positions 310 to 519 are glycolipid transfer protein homology domain; that stretch reads TFFSTMNTSF…VHGLESDEVV (210 aa).

In terms of assembly, homodimer. Interacts with ARF1; the interaction together with phosphatidylinositol 4-phosphate binding is required for FAPP2 GlcCer transfer ability.

The protein localises to the golgi apparatus. It localises to the trans-Golgi network membrane. Its subcellular location is the membrane. Cargo transport protein that is required for apical transport from the trans-Golgi network (TGN). Transports AQP2 from the trans-Golgi network (TGN) to sites of AQP2 phosphorylation. Mediates the non-vesicular transport of glucosylceramide (GlcCer) from the trans-Golgi network (TGN) to the plasma membrane and plays a pivotal role in the synthesis of complex glycosphingolipids. Binding of both phosphatidylinositol 4-phosphate (PIP) and ARF1 are essential for the GlcCer transfer ability. Also required for primary cilium formation, possibly by being involved in the transport of raft lipids to the apical membrane, and for membrane tubulation. This chain is Pleckstrin homology domain-containing family A member 8 (PLEKHA8), found in Canis lupus familiaris (Dog).